A 957-amino-acid polypeptide reads, in one-letter code: Glycine dehydrogenase (decarboxylating) (957 aa).

Residue K702 is modified to N6-(pyridoxal phosphate)lysine.

The protein belongs to the GcvP family. The glycine cleavage system is composed of four proteins: P, T, L and H. It depends on pyridoxal 5'-phosphate as a cofactor.

It carries out the reaction N(6)-[(R)-lipoyl]-L-lysyl-[glycine-cleavage complex H protein] + glycine + H(+) = N(6)-[(R)-S(8)-aminomethyldihydrolipoyl]-L-lysyl-[glycine-cleavage complex H protein] + CO2. In terms of biological role, the glycine cleavage system catalyzes the degradation of glycine. The P protein binds the alpha-amino group of glycine through its pyridoxal phosphate cofactor; CO(2) is released and the remaining methylamine moiety is then transferred to the lipoamide cofactor of the H protein. This chain is Glycine dehydrogenase (decarboxylating), found in Synechococcus sp. (strain RCC307).